Consider the following 308-residue polypeptide: MKITPIAFESLGVRSQATLIETKDLRVLVDPAISLAPRRYNLPPHQREVDRLTELAKVLVDVAKDVDVIIVSHYHYDHHDPGYVIPTDIYKNKLVFIKDPQNMINNSQKYRRAPRFLRSIKDKPSKIEIADGKTFEVGHTTISFSPAVPHGADERLGYVIQVAISDKDSTVIFTSDIEGAPKDVHLKFTKEKMPKTIIIDGPLSYLLGRVLKEEELEKSIRNMEEIVKNGLETVIIDHHVLRDINYAEVLKPVYDIAKDLGVRVTTAAEYLNLEPLILEARRKELFKEDNRPAKIPRGLANLLSAGEG.

This sequence belongs to the UPF0282 family.

This Saccharolobus islandicus (strain M.16.4 / Kamchatka #3) (Sulfolobus islandicus) protein is UPF0282 protein M164_2122.